We begin with the raw amino-acid sequence, 153 residues long: Insulin-like growth factor 1 (153 aa).

A b region spans residues 49–77; sequence GPETLCGAELVDALQFVCGDRGFYFNKPT. Disulfide bonds link Cys54–Cys96, Cys66–Cys109, and Cys95–Cys100. Residues 78–89 form a c region; it reads GYGSSSRRAPQT. The tract at residues 90 to 110 is a; the sequence is GIVDECCFRSCDLRRLEMYCA. The d stretch occupies residues 111-118; sequence PLKPAKSA. The propeptide at 119 to 153 is e peptide; sequence RSVRAQRHTDMPKAQKEVHLKNASRGSAGNKNYRM. Residues 120–153 are disordered; sequence SVRAQRHTDMPKAQKEVHLKNASRGSAGNKNYRM. Residues 125–138 are compositionally biased toward basic and acidic residues; that stretch reads RHTDMPKAQKEVHL. Residues 142–153 are compositionally biased toward polar residues; the sequence is SRGSAGNKNYRM.

The protein belongs to the insulin family. In terms of assembly, forms a ternary complex with IGFR1 and ITGAV:ITGB3. Forms a ternary complex with IGFR1 and ITGA6:ITGB4. Forms a ternary complex with IGFBP3 and ALS.

The protein localises to the secreted. Its function is as follows. The insulin-like growth factors, isolated from plasma, are structurally and functionally related to insulin but have a much higher growth-promoting activity. May be a physiological regulator of [1-14C]-2-deoxy-D-glucose (2DG) transport and glycogen synthesis in osteoblasts. Stimulates glucose transport in bone-derived osteoblastic (PyMS) cells and is effective at much lower concentrations than insulin, not only regarding glycogen and DNA synthesis but also with regard to enhancing glucose uptake. May play a role in synapse maturation. Ca(2+)-dependent exocytosis of IGF1 is required for sensory perception of smell in the olfactory bulb. Acts as a ligand for IGF1R. Binds to the alpha subunit of IGF1R, leading to the activation of the intrinsic tyrosine kinase activity which autophosphorylates tyrosine residues in the beta subunit thus initiating a cascade of down-stream signaling events leading to activation of the PI3K-AKT/PKB and the Ras-MAPK pathways. Binds to integrins ITGAV:ITGB3 and ITGA6:ITGB4. Its binding to integrins and subsequent ternary complex formation with integrins and IGFR1 are essential for IGF1 signaling. Induces the phosphorylation and activation of IGFR1, MAPK3/ERK1, MAPK1/ERK2 and AKT1. As part of the MAPK/ERK signaling pathway, acts as a negative regulator of apoptosis in cardiomyocytes via promotion of STUB1/CHIP-mediated ubiquitination and degradation of ICER-type isoforms of CREM. This Ailuropoda melanoleuca (Giant panda) protein is Insulin-like growth factor 1.